Consider the following 309-residue polypeptide: tRNA pseudouridine synthase B (309 aa).

The Nucleophile role is filled by aspartate 39. The PUA domain occupies 229–306 (LPRVVVHQES…ERVLTLRKVF (78 aa)).

It belongs to the pseudouridine synthase TruB family. Type 1 subfamily.

It catalyses the reaction uridine(55) in tRNA = pseudouridine(55) in tRNA. In terms of biological role, responsible for synthesis of pseudouridine from uracil-55 in the psi GC loop of transfer RNAs. This Thermotoga maritima (strain ATCC 43589 / DSM 3109 / JCM 10099 / NBRC 100826 / MSB8) protein is tRNA pseudouridine synthase B.